We begin with the raw amino-acid sequence, 313 residues long: Ribosomal RNA small subunit methyltransferase H (313 aa).

Residues Gly34–His36, Asp53, Phe80, Asp101, and Gln108 contribute to the S-adenosyl-L-methionine site.

Belongs to the methyltransferase superfamily. RsmH family.

Its subcellular location is the cytoplasm. It catalyses the reaction cytidine(1402) in 16S rRNA + S-adenosyl-L-methionine = N(4)-methylcytidine(1402) in 16S rRNA + S-adenosyl-L-homocysteine + H(+). Functionally, specifically methylates the N4 position of cytidine in position 1402 (C1402) of 16S rRNA. This Lacticaseibacillus casei (strain BL23) (Lactobacillus casei) protein is Ribosomal RNA small subunit methyltransferase H.